The following is a 617-amino-acid chain: uncharacterized protein (617 aa).

The segment covering 387 to 396 has biased composition (polar residues); that stretch reads NGGMSATQLP. Disordered stretches follow at residues 387–419 and 443–599; these read NGGM…HAAP and YDDF…NNEQ. The span at 404-414 shows a compositional bias: low complexity; that stretch reads RQAAANQFQQR. Polar residues predominate over residues 453–474; sequence QPLTQQQKDAARQRYQSASPEQ. 2 stretches are compositionally biased toward basic and acidic residues: residues 490–499 and 522–531; these read QRREAARERI and QRRDAARERI. Over residues 549–570 the composition is skewed to polar residues; the sequence is RPLNQQQRDNARQRVQSASPEQ. Residues 572–585 are compositionally biased toward basic and acidic residues; it reads QVFREKVQESRPQR. Polar residues predominate over residues 586-599; that stretch reads LNDSNHTVRLNNEQ.

This is an uncharacterized protein from Escherichia coli (strain K12).